The following is a 430-amino-acid chain: Serine--tRNA ligase (430 aa).

237–239 (TAE) provides a ligand contact to L-serine. 268–270 (RSE) provides a ligand contact to ATP. Position 291 (Glu291) interacts with L-serine. 355-358 (EISS) is a binding site for ATP. Ser391 lines the L-serine pocket.

The protein belongs to the class-II aminoacyl-tRNA synthetase family. Type-1 seryl-tRNA synthetase subfamily. As to quaternary structure, homodimer. The tRNA molecule binds across the dimer.

The protein localises to the cytoplasm. It catalyses the reaction tRNA(Ser) + L-serine + ATP = L-seryl-tRNA(Ser) + AMP + diphosphate + H(+). The enzyme catalyses tRNA(Sec) + L-serine + ATP = L-seryl-tRNA(Sec) + AMP + diphosphate + H(+). It participates in aminoacyl-tRNA biosynthesis; selenocysteinyl-tRNA(Sec) biosynthesis; L-seryl-tRNA(Sec) from L-serine and tRNA(Sec): step 1/1. Functionally, catalyzes the attachment of serine to tRNA(Ser). Is also able to aminoacylate tRNA(Sec) with serine, to form the misacylated tRNA L-seryl-tRNA(Sec), which will be further converted into selenocysteinyl-tRNA(Sec). The polypeptide is Serine--tRNA ligase (Citrobacter koseri (strain ATCC BAA-895 / CDC 4225-83 / SGSC4696)).